Here is a 401-residue protein sequence, read N- to C-terminus: Large ribosomal subunit protein uL4B (401 aa).

Residues 351–373 (IKAKEKKPDDGKPKAKKPLDAKT) show a composition bias toward basic and acidic residues. A disordered region spans residues 351 to 401 (IKAKEKKPDDGKPKAKKPLDAKTKMIKLAKAKKRQARAEAKTAEAKTAESK). Over residues 374 to 385 (KMIKLAKAKKRQ) the composition is skewed to basic residues. Positions 386–401 (ARAEAKTAEAKTAESK) are enriched in basic and acidic residues.

Belongs to the universal ribosomal protein uL4 family. Component of the large ribosomal subunit.

The protein localises to the cytoplasm. Component of the large ribosomal subunit. The ribosome is a large ribonucleoprotein complex responsible for the synthesis of proteins in the cell. The sequence is that of Large ribosomal subunit protein uL4B (rpl4-b) from Xenopus laevis (African clawed frog).